The following is a 464-amino-acid chain: Centrosomal protein of 55 kDa (464 aa).

Residues 1–11 (MSSRSTKDLIK) show a composition bias toward basic and acidic residues. The disordered stretch occupies residues 1 to 26 (MSSRSTKDLIKSKWGSKPSNSKSETT). 3 coiled-coil regions span residues 22-186 (KSET…QWLV), 238-337 (NDLL…FLYT), and 374-403 (QHQL…LHEF). A Phosphoserine modification is found at Ser-96. The interval 157-236 (PNCFNSSINN…GYLQEEKQKC (80 aa)) is interaction with TSG101. The tract at residues 160 to 214 (FNSSINNIHEMEIQLKDALEKNQQWLVYDQQREVYVKGLLAKIFELEKKTETAAH) is interaction with PDCD6IP. A required for localization to the interphase centrosome and to the midbody during cytokinesis region spans residues 355-464 (QMQACTLDFE…LLVHVEYCSK (110 aa)). Ser-425 and Ser-428 each carry phosphoserine; by CDK1 and MAPK1. The residue at position 430 (Thr-430) is a Phosphothreonine. The residue at position 436 (Ser-436) is a Phosphoserine; by PLK1.

In terms of assembly, homodimer. Interacts (phosphorylated on Ser-425 and Ser-428) with PLK1; the interaction is indirect via the MTMR3:MTMR4 heterooligomer, occurs during early mitosis, regulates the phosphorylation of CEP55 by PLK1 and its recruitment to the midbody where it can mediate cell abscission. Interacts with AKAP9/CG-NAP; the interaction occurs in interphase and is lost upon mitotic entry. Interacts with PCNT/Kendrin; the interaction occurs in interphase and is lost upon mitotic entry. Directly interacts with PDCD6IP; this interaction is required for PDCD6IP targeting to the midbody; CEP55 binds PDCD6IP in a 2:1 stoichiometry; PDCD6IP competes with TSG101 for the same binding site. Interacts with TSG101; TSG101 competes with PDCD6IP for the same binding site; interaction is required for cytokinesis but not for viral budding. Interacts with MVB12A, VPS37B, VPS37C and VPS28. There is a hierachy of phosphorylation, where both Ser-425 and Ser-428 are phosphorylated at the onset of mitosis, prior to Ser-436. Phosphorylation at Ser-425 and Ser-428 is required for dissociation from the centrosome at the G2/M boundary. Phosphorylation at the 3 sites, Ser-425, Ser-428 and Ser-436, is required for protein function at the final stages of cell division to complete cytokinesis successfully. As to expression, expressed in embryonic brain. Expressed in fetal brain ganglionic eminence, kidney tubules and multinucleate neurons in the temporal cortex. Expressed in adult brain, cerebellum, kidney tubules, intestine and muscles (at protein level). Widely expressed, mostly in proliferative tissues. Highly expressed in testis. Intermediate levels in adult and fetal thymus, as well as in various cancer cell lines. Low levels in different parts of the digestive tract, bone marrow, lymph nodes, placenta, fetal heart and fetal spleen. Hardly detected in brain.

Its subcellular location is the cytoplasm. It localises to the cytoskeleton. The protein resides in the microtubule organizing center. It is found in the centrosome. The protein localises to the centriole. Its subcellular location is the cleavage furrow. It localises to the midbody. The protein resides in the midbody ring. Functionally, plays a role in mitotic exit and cytokinesis. Recruits PDCD6IP and TSG101 to midbody during cytokinesis. Required for successful completion of cytokinesis. Not required for microtubule nucleation. Plays a role in the development of the brain and kidney. The sequence is that of Centrosomal protein of 55 kDa from Homo sapiens (Human).